The following is a 140-amino-acid chain: Inner membrane protein YphA (140 aa).

At methionine 1 to arginine 13 the chain is on the cytoplasmic side. Residues proline 14–proline 34 traverse the membrane as a helical segment. At lysine 35–leucine 56 the chain is on the periplasmic side. A helical transmembrane segment spans residues alanine 57 to phenylalanine 77. The Cytoplasmic segment spans residues threonine 78–arginine 79. A helical transmembrane segment spans residues proline 80–tryptophan 100. Residues aspartate 101 to lysine 116 lie on the Periplasmic side of the membrane. The chain crosses the membrane as a helical span at residues asparagine 117–leucine 137. Over aspartate 138–arginine 140 the chain is Cytoplasmic.

The protein belongs to the DoxX family.

The protein localises to the cell inner membrane. This chain is Inner membrane protein YphA (yphA), found in Escherichia coli (strain K12).